A 111-amino-acid chain; its full sequence is Nucleoid-associated protein Fphi_0115 (111 aa).

Positions 1–27 are disordered; that stretch reads MNFDMSKLMQQAQKMQEQMKKAQQERE. Basic and acidic residues predominate over residues 17-27; that stretch reads EQMKKAQQERE.

Belongs to the YbaB/EbfC family. Homodimer.

The protein localises to the cytoplasm. It is found in the nucleoid. Functionally, binds to DNA and alters its conformation. May be involved in regulation of gene expression, nucleoid organization and DNA protection. The polypeptide is Nucleoid-associated protein Fphi_0115 (Francisella philomiragia subsp. philomiragia (strain ATCC 25017 / CCUG 19701 / FSC 153 / O#319-036)).